Consider the following 276-residue polypeptide: Probable ABC transporter permease protein PH1036 (276 aa).

6 helical membrane passes run 12–32 (IAWS…MASV), 75–95 (IVAI…AYAF), 109–129 (FIVL…YFLL), 137–157 (TFRG…IFFM), 186–206 (IVLP…FTWV), and 241–261 (GLLT…YALF). The ABC transmembrane type-1 domain occupies 70–261 (LKNSLIVAIP…LVPLLVYALF (192 aa)).

This sequence belongs to the binding-protein-dependent transport system permease family. MalFG subfamily.

It is found in the cell membrane. Probably part of a binding-protein-dependent transport system PH1036/38/39. Probably responsible for the translocation of the substrate across the membrane. In Pyrococcus horikoshii (strain ATCC 700860 / DSM 12428 / JCM 9974 / NBRC 100139 / OT-3), this protein is Probable ABC transporter permease protein PH1036.